The chain runs to 609 residues: UvrABC system protein C (609 aa).

Residues 19–97 enclose the GIY-YIG domain; that stretch reads ASPGCYLWKS…IKKHNPRFNV (79 aa). One can recognise a UVR domain in the interval 208-243; that stretch reads ESLVSDLNIKMSNASERLDFEKAARYRDMLQRIQNF.

It belongs to the UvrC family. Interacts with UvrB in an incision complex.

It is found in the cytoplasm. The UvrABC repair system catalyzes the recognition and processing of DNA lesions. UvrC both incises the 5' and 3' sides of the lesion. The N-terminal half is responsible for the 3' incision and the C-terminal half is responsible for the 5' incision. The sequence is that of UvrABC system protein C from Leptospira interrogans serogroup Icterohaemorrhagiae serovar copenhageni (strain Fiocruz L1-130).